The sequence spans 704 residues: Elongation factor G 1 (704 aa).

The tr-type G domain maps to Glu-8 to Thr-290. GTP is bound by residues Ala-17–Thr-24, Asp-88–His-92, and Asn-142–Asp-145.

Belongs to the TRAFAC class translation factor GTPase superfamily. Classic translation factor GTPase family. EF-G/EF-2 subfamily.

The protein localises to the cytoplasm. Functionally, catalyzes the GTP-dependent ribosomal translocation step during translation elongation. During this step, the ribosome changes from the pre-translocational (PRE) to the post-translocational (POST) state as the newly formed A-site-bound peptidyl-tRNA and P-site-bound deacylated tRNA move to the P and E sites, respectively. Catalyzes the coordinated movement of the two tRNA molecules, the mRNA and conformational changes in the ribosome. The sequence is that of Elongation factor G 1 from Pseudoalteromonas translucida (strain TAC 125).